The chain runs to 83 residues: Small ribosomal subunit protein uS17 (83 aa).

This sequence belongs to the universal ribosomal protein uS17 family. As to quaternary structure, part of the 30S ribosomal subunit.

Functionally, one of the primary rRNA binding proteins, it binds specifically to the 5'-end of 16S ribosomal RNA. The chain is Small ribosomal subunit protein uS17 from Nitratiruptor sp. (strain SB155-2).